The chain runs to 90 residues: MRFVGLVNRIFRHSDSMTGRPGQQLASGARARIQGMTSFLSAEEKRKEEEMLRKIKEHGLKLCTKEKQEEMTKAQAGVRCMCTHLGKRGG.

This sequence belongs to the UPF0329 family.

The sequence is that of UPF0329 protein ECU04_1650 from Encephalitozoon cuniculi (strain GB-M1) (Microsporidian parasite).